A 442-amino-acid polypeptide reads, in one-letter code: Histidine--tRNA ligase (442 aa).

This sequence belongs to the class-II aminoacyl-tRNA synthetase family. As to quaternary structure, homodimer.

It is found in the cytoplasm. It carries out the reaction tRNA(His) + L-histidine + ATP = L-histidyl-tRNA(His) + AMP + diphosphate + H(+). This Helicobacter pylori (strain HPAG1) protein is Histidine--tRNA ligase.